The following is a 740-amino-acid chain: Phosphoribosylformylglycinamidine synthase subunit PurL (740 aa).

Histidine 53 is a catalytic residue. ATP-binding residues include tyrosine 56 and lysine 95. Glutamate 97 provides a ligand contact to Mg(2+). Substrate contacts are provided by residues 98–101 (SHNH) and arginine 120. Residue histidine 99 is the Proton acceptor of the active site. Aspartate 121 is a Mg(2+) binding site. Glutamine 244 lines the substrate pocket. Aspartate 272 provides a ligand contact to Mg(2+). Residue 316–318 (ESQ) coordinates substrate. ATP-binding residues include aspartate 497 and glycine 534. Residue asparagine 535 coordinates Mg(2+). Serine 537 is a substrate binding site.

Belongs to the FGAMS family. In terms of assembly, monomer. Part of the FGAM synthase complex composed of 1 PurL, 1 PurQ and 2 PurS subunits.

The protein localises to the cytoplasm. It carries out the reaction N(2)-formyl-N(1)-(5-phospho-beta-D-ribosyl)glycinamide + L-glutamine + ATP + H2O = 2-formamido-N(1)-(5-O-phospho-beta-D-ribosyl)acetamidine + L-glutamate + ADP + phosphate + H(+). It participates in purine metabolism; IMP biosynthesis via de novo pathway; 5-amino-1-(5-phospho-D-ribosyl)imidazole from N(2)-formyl-N(1)-(5-phospho-D-ribosyl)glycinamide: step 1/2. Functionally, part of the phosphoribosylformylglycinamidine synthase complex involved in the purines biosynthetic pathway. Catalyzes the ATP-dependent conversion of formylglycinamide ribonucleotide (FGAR) and glutamine to yield formylglycinamidine ribonucleotide (FGAM) and glutamate. The FGAM synthase complex is composed of three subunits. PurQ produces an ammonia molecule by converting glutamine to glutamate. PurL transfers the ammonia molecule to FGAR to form FGAM in an ATP-dependent manner. PurS interacts with PurQ and PurL and is thought to assist in the transfer of the ammonia molecule from PurQ to PurL. This chain is Phosphoribosylformylglycinamidine synthase subunit PurL, found in Rhodospirillum rubrum (strain ATCC 11170 / ATH 1.1.1 / DSM 467 / LMG 4362 / NCIMB 8255 / S1).